The primary structure comprises 198 residues: Copy number protein (198 aa).

It localises to the cell membrane. Its function is as follows. Involved in copy number control of pIP404. This basic and hydrophobic protein may exert its effect from the cytoplasmic membrane. The sequence is that of Copy number protein (cop) from Clostridium perfringens.